Here is a 109-residue protein sequence, read N- to C-terminus: Large ribosomal subunit protein uL24 (109 aa).

This sequence belongs to the universal ribosomal protein uL24 family. Part of the 50S ribosomal subunit.

Functionally, one of two assembly initiator proteins, it binds directly to the 5'-end of the 23S rRNA, where it nucleates assembly of the 50S subunit. One of the proteins that surrounds the polypeptide exit tunnel on the outside of the subunit. The chain is Large ribosomal subunit protein uL24 from Rickettsia bellii (strain RML369-C).